An 834-amino-acid polypeptide reads, in one-letter code: MKYDHQSIEIKWQRTWEESGAFHCDHHSDKPKYYVLEMFPYPSGNIHMGHVRNYSIGDVVARFKRMQGFNVLHPMGWDAFGLPAENAAIKHGTHPAKWTFSNIDNMRTQLRRLGYSYDWRRELATCTPEYYRWEQQFFLRFFEKGLVYRKQAPQNWCPKCHTVLANEQVIEGLCWRCDSAVEQKNLTQWFLRITDYAEELLADLDKLEAGWPERVVSMQRNWIGKSIGAEIVFPLEGPGGSGNDDSITVFTTRQDTVFGATFMSLAPEHPLVEQLIDGKPEAPAVRAFVERIRNMDRIVRQSDDLEKEGVFTGAYCVNPFTGRRMPIWVANFVLAEYGTGAVMAVPAHDQRDFEFARKYDLPMQVVIQPEGDALDTAAMQAAWTEAGLLVNSGEFDGLPNEAAKQKIADSLETSGKGRRTVNYRLRDWNISRQRYWGAPIPVVYCDACGVVAEKDENLPVLLPLEVRTHEDGRSPLPDTPEFAECACPKCGGKARRETDTMDTFVESSWYFARYTSASKDDGAFDPAALKYWMPVDQYIGGVEHAILHLLYSRFFVKALRDCGYMDLDEPFANLLTQGMVLKEGAKMSKSKGNVVDPTEMIARYGADTVRLFCLFAAPPERDFDWSDSGIEGSYRFIGRIWRLAEELSGVLLPVKACSATAADAATPQGKDLRNKEHATVRKAGADISDRFQFNTAIAAVMELVNALYLAKDELSGDEGGRKVLSSAVATVLTLLSPITPHIAEELWASIGNAGRITDEPWPQWSEEALARDEETIVVQINGKLRGRVSVPAGADAKAIEAAALSEPNVARHLEDVTVRKVVVIPGKLVNVVVG.

Residues 40-50 (PYPSGNIHMGH) carry the 'HIGH' region motif. The short motif at 586–590 (KMSKS) is the 'KMSKS' region element. Lys589 is a binding site for ATP.

It belongs to the class-I aminoacyl-tRNA synthetase family.

The protein localises to the cytoplasm. It carries out the reaction tRNA(Leu) + L-leucine + ATP = L-leucyl-tRNA(Leu) + AMP + diphosphate. The protein is Leucine--tRNA ligase of Nitratidesulfovibrio vulgaris (strain DSM 19637 / Miyazaki F) (Desulfovibrio vulgaris).